The primary structure comprises 302 residues: Pyridoxal kinase (302 aa).

Substrate contacts are provided by serine 10, threonine 45, and tyrosine 122. ATP-binding positions include 181 to 182 and 215 to 227; these read TS and VGPK…TGTG. Aspartate 228 lines the substrate pocket.

It belongs to the pyridoxine kinase family. Homodimer. Requires a divalent metal cation as cofactor.

It localises to the cytoplasm. The catalysed reaction is pyridoxal + ATP = pyridoxal 5'-phosphate + ADP + H(+). It functions in the pathway cofactor metabolism; pyridoxal 5'-phosphate salvage; pyridoxal 5'-phosphate from pyridoxal: step 1/1. Functionally, required for synthesis of pyridoxal-5-phosphate from vitamin B6. In Dictyostelium discoideum (Social amoeba), this protein is Pyridoxal kinase (pykA).